A 92-amino-acid polypeptide reads, in one-letter code: Small integral membrane protein 12 (92 aa).

The chain crosses the membrane as a helical span at residues 15–34 (YVTFPVAFVVGAVGYHLEWF).

It belongs to the SMIM12 family.

Its subcellular location is the membrane. The sequence is that of Small integral membrane protein 12 (Smim12) from Mus musculus (Mouse).